A 61-amino-acid polypeptide reads, in one-letter code: Metallothionein-1 (61 aa).

Met1 is subject to N-acetylmethionine. The beta stretch occupies residues 1–29 (MDPNCSCSTGGSCTCSSSCGCKNCKCTSC). A divalent metal cation is bound by residues Cys5, Cys7, Cys13, Cys15, Cys19, Cys21, Cys24, Cys26, Cys29, Cys33, Cys34, Cys36, Cys37, Cys41, Cys44, Cys48, Cys50, Cys57, Cys59, and Cys60. The interval 30-61 (KKSCCSCCPVGCSKCAQGCVCKGASDKCTCCA) is alpha.

This sequence belongs to the metallothionein superfamily. Type 1 family.

Its function is as follows. Metallothioneins have a high content of cysteine residues that bind various heavy metals; these proteins are transcriptionally regulated by both heavy metals and glucocorticoids. The sequence is that of Metallothionein-1 (Mt1) from Rattus norvegicus (Rat).